Here is a 238-residue protein sequence, read N- to C-terminus: ATP synthase subunit O, mitochondrial (238 aa).

The N-terminal 36 residues, 1–36 (MANRFRSGISFFKTIAVTDSVSSVRSKSLFPALRTY), are a transit peptide targeting the mitochondrion. Thr-90 is subject to Phosphothreonine.

Belongs to the ATPase delta chain family. F-type ATPases have 2 components, CF(1) - the catalytic core - and CF(0) - the membrane proton channel. CF(1) has five subunits: alpha(3), beta(3), gamma(1), delta(1), epsilon(1). CF(0) has three main subunits: a, b and c.

The protein resides in the mitochondrion. It localises to the mitochondrion inner membrane. Functionally, mitochondrial membrane ATP synthase (F(1)F(0) ATP synthase or Complex V) produces ATP from ADP in the presence of a proton gradient across the membrane which is generated by electron transport complexes of the respiratory chain. F-type ATPases consist of two structural domains, F(1) - containing the extramembraneous catalytic core and F(0) - containing the membrane proton channel, linked together by a central stalk and a peripheral stalk. During catalysis, ATP synthesis in the catalytic domain of F(1) is coupled via a rotary mechanism of the central stalk subunits to proton translocation. Part of the complex F(0) domain and the peripheric stalk, which acts as a stator to hold the catalytic alpha(3)beta(3) subcomplex and subunit a/ATP6 static relative to the rotary elements. The polypeptide is ATP synthase subunit O, mitochondrial (Arabidopsis thaliana (Mouse-ear cress)).